Consider the following 509-residue polypeptide: T-complex protein 11-like protein 1 (509 aa).

Residues 1-12 are compositionally biased toward basic and acidic residues; the sequence is MSENLDKSHVDE. The interval 1–57 is disordered; sequence MSENLDKSHVDEAGEAEAAASEQGLEGALECSDETLQKKVKSDSPSSQRVGRPHSSP. Low complexity predominate over residues 16-30; the sequence is AEAAASEQGLEGALE. At Ser-56 the chain carries Phosphoserine.

The protein belongs to the TCP11 family.

The sequence is that of T-complex protein 11-like protein 1 (Tcp11l1) from Mus musculus (Mouse).